A 405-amino-acid chain; its full sequence is Phosphoglycerate kinase (405 aa).

Residues 23 to 25, arginine 39, 62 to 65, arginine 121, and arginine 154 each bind substrate; these read DFN and HLGR. ATP-binding positions include lysine 207, glycine 298, glutamate 329, and 355-358; that span reads GGDT.

Belongs to the phosphoglycerate kinase family. In terms of assembly, monomer.

Its subcellular location is the cytoplasm. The catalysed reaction is (2R)-3-phosphoglycerate + ATP = (2R)-3-phospho-glyceroyl phosphate + ADP. It functions in the pathway carbohydrate degradation; glycolysis; pyruvate from D-glyceraldehyde 3-phosphate: step 2/5. This Campylobacter hominis (strain ATCC BAA-381 / DSM 21671 / CCUG 45161 / LMG 19568 / NCTC 13146 / CH001A) protein is Phosphoglycerate kinase.